The primary structure comprises 176 residues: Large ribosomal subunit protein uL6 (176 aa).

The segment covering 151–170 has biased composition (basic and acidic residues); that stretch reads RPPEPYKGKGVRYADEQVRR. The interval 151-176 is disordered; sequence RPPEPYKGKGVRYADEQVRRKEAKKK.

This sequence belongs to the universal ribosomal protein uL6 family. Part of the 50S ribosomal subunit.

Its function is as follows. This protein binds to the 23S rRNA, and is important in its secondary structure. It is located near the subunit interface in the base of the L7/L12 stalk, and near the tRNA binding site of the peptidyltransferase center. The polypeptide is Large ribosomal subunit protein uL6 (Shewanella piezotolerans (strain WP3 / JCM 13877)).